The following is a 508-amino-acid chain: Hydroxymethylglutaryl-CoA synthase, mitochondrial (508 aa).

A mitochondrion-targeting transit peptide spans 1-37; sequence MQRLLTPVRQVLRVKRAMQEASFMPPLLPPAAHQRFS. K52 carries the post-translational modification N6-succinyllysine. (3S)-3-hydroxy-3-methylglutaryl-CoA contacts are provided by E80 and A81. The active-site Proton donor/acceptor is the E132. The (3S)-3-hydroxy-3-methylglutaryl-CoA site is built by C166, N204, and T208. The active-site Acyl-thioester intermediate is C166. An N6-acetyllysine modification is found at K243. Residue K256 is modified to N6-acetyllysine; alternate. An N6-succinyllysine; alternate modification is found at K256. 2 residues coordinate (3S)-3-hydroxy-3-methylglutaryl-CoA: S258 and H301. The active-site Proton donor/acceptor is the H301. K306 carries the N6-acetyllysine modification. K310 provides a ligand contact to (3S)-3-hydroxy-3-methylglutaryl-CoA. K310 is subject to N6-acetyllysine; alternate. The residue at position 310 (K310) is an N6-succinyllysine; alternate. K333 is subject to N6-succinyllysine. K342, K350, K354, and K358 each carry N6-acetyllysine; alternate. 4 positions are modified to N6-succinyllysine; alternate: K342, K350, K354, and K358. (3S)-3-hydroxy-3-methylglutaryl-CoA contacts are provided by N380 and S414. The residue at position 433 (S433) is a Phosphoserine. K437 is modified (N6-acetyllysine). A phosphoserine mark is found at S440 and S456. Position 473 is an N6-acetyllysine; alternate (K473). Residue K473 is modified to N6-succinyllysine; alternate.

Belongs to the thiolase-like superfamily. HMG-CoA synthase family. Homodimer. Post-translationally, succinylated. Desuccinylated by SIRT5. Succinylation, at least at Lys-310, inhibits the enzymatic activity.

The protein resides in the mitochondrion. It carries out the reaction acetoacetyl-CoA + acetyl-CoA + H2O = (3S)-3-hydroxy-3-methylglutaryl-CoA + CoA + H(+). The protein operates within metabolic intermediate biosynthesis; (R)-mevalonate biosynthesis; (R)-mevalonate from acetyl-CoA: step 2/3. Functionally, catalyzes the first irreversible step in ketogenesis, condensing acetyl-CoA to acetoacetyl-CoA to form HMG-CoA, which is converted by HMG-CoA reductase (HMGCR) into mevalonate. This Sus scrofa (Pig) protein is Hydroxymethylglutaryl-CoA synthase, mitochondrial (HMGCS2).